Consider the following 228-residue polypeptide: ATP synthase subunit a (228 aa).

6 helical membrane passes run 14 to 34 (YFLL…WLFF), 71 to 91 (WVPI…LGLL), 101 to 121 (ISLT…LGFY), 139 to 159 (FLLP…PIAL), 165 to 185 (ANLT…WVLM), and 188 to 208 (VAIA…EIGV).

Belongs to the ATPase A chain family. In terms of assembly, F-type ATPases have 2 components, CF(1) - the catalytic core - and CF(0) - the membrane proton channel. CF(1) has five subunits: alpha(3), beta(3), gamma(1), delta(1), epsilon(1). CF(0) has three main subunits: a, b and c.

The protein resides in the mitochondrion inner membrane. Its function is as follows. Mitochondrial membrane ATP synthase (F(1)F(0) ATP synthase or Complex V) produces ATP from ADP in the presence of a proton gradient across the membrane which is generated by electron transport complexes of the respiratory chain. F-type ATPases consist of two structural domains, F(1) - containing the extramembraneous catalytic core and F(0) - containing the membrane proton channel, linked together by a central stalk and a peripheral stalk. During catalysis, ATP synthesis in the catalytic domain of F(1) is coupled via a rotary mechanism of the central stalk subunits to proton translocation. Key component of the proton channel; it may play a direct role in the translocation of protons across the membrane. The polypeptide is ATP synthase subunit a (ATP6) (Pisaster ochraceus (Ochre sea star)).